Reading from the N-terminus, the 212-residue chain is Deoxyribose-phosphate aldolase (212 aa).

Asp89 functions as the Proton donor/acceptor in the catalytic mechanism. The active-site Schiff-base intermediate with acetaldehyde is the Lys151. Lys180 acts as the Proton donor/acceptor in catalysis.

The protein belongs to the DeoC/FbaB aldolase family. DeoC type 1 subfamily.

The protein localises to the cytoplasm. The enzyme catalyses 2-deoxy-D-ribose 5-phosphate = D-glyceraldehyde 3-phosphate + acetaldehyde. The protein operates within carbohydrate degradation; 2-deoxy-D-ribose 1-phosphate degradation; D-glyceraldehyde 3-phosphate and acetaldehyde from 2-deoxy-alpha-D-ribose 1-phosphate: step 2/2. Catalyzes a reversible aldol reaction between acetaldehyde and D-glyceraldehyde 3-phosphate to generate 2-deoxy-D-ribose 5-phosphate. The chain is Deoxyribose-phosphate aldolase from Clostridium botulinum (strain Loch Maree / Type A3).